We begin with the raw amino-acid sequence, 260 residues long: Ribosomal RNA small subunit methyltransferase J (260 aa).

S-adenosyl-L-methionine is bound by residues 125–126 (ER) and aspartate 179.

Belongs to the methyltransferase superfamily. RsmJ family.

It localises to the cytoplasm. The catalysed reaction is guanosine(1516) in 16S rRNA + S-adenosyl-L-methionine = N(2)-methylguanosine(1516) in 16S rRNA + S-adenosyl-L-homocysteine + H(+). Functionally, specifically methylates the guanosine in position 1516 of 16S rRNA. This Pseudomonas fluorescens (strain Pf0-1) protein is Ribosomal RNA small subunit methyltransferase J.